The following is a 259-amino-acid chain: Global transcriptional regulator CodY (259 aa).

Residues 1–155 (MNLLEKTRQL…SATVVGMEIL (155 aa)) are GAF domain. Residues 203–222 (ASKIADRVGITRSVIVNALR) constitute a DNA-binding region (H-T-H motif).

The protein belongs to the CodY family.

The protein localises to the cytoplasm. Its function is as follows. DNA-binding global transcriptional regulator which is involved in the adaptive response to starvation and acts by directly or indirectly controlling the expression of numerous genes in response to nutrient availability. During rapid exponential growth, CodY is highly active and represses genes whose products allow adaptation to nutrient depletion. This is Global transcriptional regulator CodY from Exiguobacterium sp. (strain ATCC BAA-1283 / AT1b).